Here is a 321-residue protein sequence, read N- to C-terminus: Cilia- and flagella-associated protein 161 (321 aa).

Positions Leu-275–Met-321 are disordered. The segment covering Pro-285–Val-299 has biased composition (basic and acidic residues).

In terms of assembly, microtubule inner protein component of sperm flagellar doublet microtubules. In terms of tissue distribution, expressed in trachea multiciliated cells.

It is found in the cytoplasm. The protein resides in the cytoskeleton. Its subcellular location is the cilium axoneme. It localises to the flagellum axoneme. Functionally, microtubule inner protein (MIP) part of the dynein-decorated doublet microtubules (DMTs) in cilia axoneme, which is required for motile cilia beating. This chain is Cilia- and flagella-associated protein 161, found in Bos taurus (Bovine).